The sequence spans 221 residues: MENIYIALKTIKKMAGEKNTVFISSKELANEMNVSQQTASRIIISLDRLGYITRTLENRKQKITINDSGLDVLYREYNEISSILRFSQELKLVGAVQDGLGEGKYYISKKGYKDQFIAKLGIDPYPGTLNIKILNEYENNLRRIKNSDGIYITGFKDQQRTFGGVFCHAARIDGIRCFIIFPERSVYRDTFEVISEKYLRKELNLENGAIIEVLASIDGKL.

Positions 1–89 (MENIYIALKT…ISSILRFSQE (89 aa)) are H-T-H motif-like. The segment at 90–221 (LKLVGAVQDG…EVLASIDGKL (132 aa)) is riboflavin kinase. A CDP-binding site is contributed by 99–104 (GLGEGK). Mg(2+) is bound by residues Thr128 and Asn130. Ser185 and Glu192 together coordinate FMN. 197–200 (KYLR) contributes to the CDP binding site.

Belongs to the archaeal riboflavin kinase family. It depends on Mg(2+) as a cofactor.

The enzyme catalyses riboflavin + CTP = CDP + FMN + H(+). It functions in the pathway cofactor biosynthesis; FMN biosynthesis; FMN from riboflavin (CTP route): step 1/1. Catalyzes the CTP-dependent phosphorylation of riboflavin (vitamin B2) to form flavin mononucleotide (FMN). This is Riboflavin kinase (ribK) from Picrophilus torridus (strain ATCC 700027 / DSM 9790 / JCM 10055 / NBRC 100828 / KAW 2/3).